Reading from the N-terminus, the 319-residue chain is HPr kinase/phosphorylase (319 aa).

Residues His-137 and Lys-158 contribute to the active site. 152 to 159 (GDSGVGKS) is a binding site for ATP. Ser-159 serves as a coordination point for Mg(2+). Catalysis depends on Asp-176, which acts as the Proton acceptor; for phosphorylation activity. Proton donor; for dephosphorylation activity. An important for the catalytic mechanism of both phosphorylation and dephosphorylation region spans residues 201–210 (MEIRGLGIIN). Glu-202 contributes to the Mg(2+) binding site. Arg-243 is an active-site residue. The important for the catalytic mechanism of dephosphorylation stretch occupies residues 264-269 (PVRPGR).

Belongs to the HPrK/P family. Homohexamer. Requires Mg(2+) as cofactor.

The enzyme catalyses [HPr protein]-L-serine + ATP = [HPr protein]-O-phospho-L-serine + ADP + H(+). It carries out the reaction [HPr protein]-O-phospho-L-serine + phosphate + H(+) = [HPr protein]-L-serine + diphosphate. Its function is as follows. Catalyzes the ATP- as well as the pyrophosphate-dependent phosphorylation of a specific serine residue in HPr, a phosphocarrier protein of the phosphoenolpyruvate-dependent sugar phosphotransferase system (PTS). HprK/P also catalyzes the pyrophosphate-producing, inorganic phosphate-dependent dephosphorylation (phosphorolysis) of seryl-phosphorylated HPr (P-Ser-HPr). The protein is HPr kinase/phosphorylase of Treponema pallidum subsp. pallidum (strain SS14).